The chain runs to 254 residues: Persulfide dioxygenase ETHE1, mitochondrial (254 aa).

A mitochondrion-targeting transit peptide spans 1–7; the sequence is MASAVVR. Residues Ser14, Ser17, and Ser19 each carry the phosphoserine modification. Lys32 is modified (N6-acetyllysine; alternate). Lys32 carries the N6-succinyllysine; alternate modification. The residue at position 66 (Lys66) is an N6-acetyllysine. Fe cation is bound by residues His79, His135, and Asp154. Lys172 is modified (N6-acetyllysine; alternate). At Lys172 the chain carries N6-succinyllysine; alternate.

Belongs to the metallo-beta-lactamase superfamily. Glyoxalase II family. As to quaternary structure, homodimer. Monomer. Interacts with TST. May interact with RELA. It depends on Fe(2+) as a cofactor.

Its subcellular location is the cytoplasm. The protein resides in the nucleus. It is found in the mitochondrion matrix. The catalysed reaction is S-sulfanylglutathione + O2 + H2O = sulfite + glutathione + 2 H(+). First described as a protein that can shuttle between the nucleus and the cytoplasm and suppress p53-induced apoptosis by sequestering the transcription factor RELA/NFKB3 in the cytoplasm and preventing its accumulation in the nucleus. Sulfur dioxygenase that plays an essential role in hydrogen sulfide catabolism in the mitochondrial matrix. Hydrogen sulfide (H(2)S) is first oxidized by SQRDL, giving rise to cysteine persulfide residues. ETHE1 consumes molecular oxygen to catalyze the oxidation of the persulfide, once it has been transferred to a thiophilic acceptor, such as glutathione (R-SSH). Plays an important role in metabolic homeostasis in mitochondria by metabolizing hydrogen sulfide and preventing the accumulation of supraphysiological H(2)S levels that have toxic effects, due to the inhibition of cytochrome c oxidase. This is Persulfide dioxygenase ETHE1, mitochondrial (Ethe1) from Mus musculus (Mouse).